The following is a 306-amino-acid chain: MELKDYYAIMGVKPTDDLKTIKTAYRRLARKYHPDVSKEPDAEARFKEVAEAWEVLSDEQRRAEYDQLWQHRNDPQFNRQFQQHEGQPYNAEDFDDIFSSIFGQHGRHSHHRHAARGHDIEIEVAVFLEETLEEHQRTISYSVPVYNAFGLVEREIPKTLNVKIPAGVSNGQRIRLKGQGTPGENGGPNGDLWLVIHIAPHPLFDIVNQDLEVVLPLAPWEAALGAKVSVPTLKERILLTIPPGSQAGQRLRIKGKGLASKKHTGDLYAIIKIVMPPKPDEKTAALWQQLADAQSSFDPRQQWGKA.

In terms of domain architecture, J spans D5–W69.

The protein localises to the cytoplasm. Its subcellular location is the nucleoid. In terms of biological role, DNA-binding protein that preferentially recognizes a curved DNA sequence. It is probably a functional analog of DnaJ; displays overlapping activities with DnaJ, but functions under different conditions, probably acting as a molecular chaperone in an adaptive response to environmental stresses other than heat shock. Lacks autonomous chaperone activity; binds native substrates and targets them for recognition by DnaK. Its activity is inhibited by the binding of CbpM. This is Curved DNA-binding protein from Salmonella paratyphi A (strain ATCC 9150 / SARB42).